Reading from the N-terminus, the 294-residue chain is Lipoyl synthase (294 aa).

7 residues coordinate [4Fe-4S] cluster: Cys-38, Cys-43, Cys-49, Cys-64, Cys-68, Cys-71, and Ser-277. In terms of domain architecture, Radical SAM core spans 50–266; that stretch reads WSRGTATFLL…RSFAEGAGFR (217 aa).

It belongs to the radical SAM superfamily. Lipoyl synthase family. The cofactor is [4Fe-4S] cluster.

The protein resides in the cytoplasm. It catalyses the reaction [[Fe-S] cluster scaffold protein carrying a second [4Fe-4S](2+) cluster] + N(6)-octanoyl-L-lysyl-[protein] + 2 oxidized [2Fe-2S]-[ferredoxin] + 2 S-adenosyl-L-methionine + 4 H(+) = [[Fe-S] cluster scaffold protein] + N(6)-[(R)-dihydrolipoyl]-L-lysyl-[protein] + 4 Fe(3+) + 2 hydrogen sulfide + 2 5'-deoxyadenosine + 2 L-methionine + 2 reduced [2Fe-2S]-[ferredoxin]. It functions in the pathway protein modification; protein lipoylation via endogenous pathway; protein N(6)-(lipoyl)lysine from octanoyl-[acyl-carrier-protein]: step 2/2. In terms of biological role, catalyzes the radical-mediated insertion of two sulfur atoms into the C-6 and C-8 positions of the octanoyl moiety bound to the lipoyl domains of lipoate-dependent enzymes, thereby converting the octanoylated domains into lipoylated derivatives. This chain is Lipoyl synthase, found in Pelodictyon phaeoclathratiforme (strain DSM 5477 / BU-1).